The sequence spans 734 residues: Ribosomal RNA large subunit methyltransferase K/L (734 aa).

Positions 49–167 (HAYRICMWSR…KTEHTYCLDL (119 aa)) constitute a THUMP domain.

The protein belongs to the methyltransferase superfamily. RlmKL family.

The protein resides in the cytoplasm. The catalysed reaction is guanosine(2445) in 23S rRNA + S-adenosyl-L-methionine = N(2)-methylguanosine(2445) in 23S rRNA + S-adenosyl-L-homocysteine + H(+). The enzyme catalyses guanosine(2069) in 23S rRNA + S-adenosyl-L-methionine = N(2)-methylguanosine(2069) in 23S rRNA + S-adenosyl-L-homocysteine + H(+). Functionally, specifically methylates the guanine in position 2445 (m2G2445) and the guanine in position 2069 (m7G2069) of 23S rRNA. The polypeptide is Ribosomal RNA large subunit methyltransferase K/L (Acinetobacter baumannii (strain SDF)).